The sequence spans 681 residues: Serine/threonine-protein kinase PAK 6 (681 aa).

Disordered regions lie at residues 1–30, 149–169, 200–256, and 268–355; these read MFRKKKKKRPEISAPQNFQHRVHTSFDPKE, GGTPAGHKQMPWPEPQSPRVL, QSSP…ESSL, and TAAT…PRTW. Positions 12 to 25 constitute a CRIB domain; that stretch reads ISAPQNFQHRVHTS. A linker region spans residues 26–406; that stretch reads FDPKEGKFVG…VVDQGDPRLL (381 aa). Composition is skewed to low complexity over residues 201-212 and 268-278; these read SSPPGASPPTGT and TAATAPPSSSK. Residues 308 to 333 show a composition bias toward polar residues; that stretch reads SLPSDQPVGTFSPLTTSDTSSPQKSL. The Protein kinase domain occupies 407 to 658; it reads LDSYVKIGEG…AQELLDHPFL (252 aa). ATP contacts are provided by residues 413-421 and lysine 436; that span reads IGEGSTGIV. Aspartate 526 functions as the Proton acceptor in the catalytic mechanism. Serine 560 carries the post-translational modification Phosphoserine; by autocatalysis.

It belongs to the protein kinase superfamily. STE Ser/Thr protein kinase family. STE20 subfamily. As to quaternary structure, interacts tightly with GTP-bound but not GDP-bound CDC42/p21 and RAC1. Interacts with the androgen receptor AR and the estrogen receptor ESR1. Interacts with IQGAP1 and PPM1B. In terms of processing, autophosphorylated. Phosphorylated by MAP2K6//MAPKK6, leading to PAK6 activation. As to expression, selectively expressed in brain and testis, with lower levels in multiple tissues including prostate and breast.

It is found in the cytoplasm. The protein resides in the nucleus. The enzyme catalyses L-seryl-[protein] + ATP = O-phospho-L-seryl-[protein] + ADP + H(+). It carries out the reaction L-threonyl-[protein] + ATP = O-phospho-L-threonyl-[protein] + ADP + H(+). In terms of biological role, serine/threonine protein kinase that plays a role in the regulation of gene transcription. The kinase activity is induced by various effectors including AR or MAP2K6/MAPKK6. Phosphorylates the DNA-binding domain of androgen receptor/AR and thereby inhibits AR-mediated transcription. Also inhibits ESR1-mediated transcription. May play a role in cytoskeleton regulation by interacting with IQGAP1. May protect cells from apoptosis through phosphorylation of BAD. The chain is Serine/threonine-protein kinase PAK 6 (PAK6) from Homo sapiens (Human).